A 570-amino-acid chain; its full sequence is PTS system lactose-specific EIICB component (570 aa).

The 402-residue stretch at 9–410 (IEKGKPFFEK…VVDIIIYYPF (402 aa)) folds into the PTS EIIC type-3 domain. A run of 9 helical transmembrane segments spans residues 31-51 (GFIS…IAYV), 65-85 (AILM…VAGT), 104-124 (INFI…ASDP), 133-153 (AFMG…TVIV), 178-198 (FKDL…DLVI), 223-243 (GWIG…VGIH), 283-303 (MFIV…MFMW), 340-360 (VFFI…KLFV), and 382-402 (IIMG…LIVV). The 104-residue stretch at 467–570 (QTNVLVLCAG…LDFVQQQFEN (104 aa)) folds into the PTS EIIB type-3 domain. Residue cysteine 474 is the Phosphocysteine intermediate; for EIIB activity of the active site. Cysteine 474 is subject to Phosphocysteine; by EIIA.

It is found in the cell membrane. The catalysed reaction is lactose(out) + N(pros)-phospho-L-histidyl-[protein] = lactose 6-phosphate(in) + L-histidyl-[protein]. In terms of biological role, the phosphoenolpyruvate-dependent sugar phosphotransferase system (sugar PTS), a major carbohydrate active transport system, catalyzes the phosphorylation of incoming sugar substrates concomitantly with their translocation across the cell membrane. The enzyme II LacEF PTS system is involved in lactose transport. This chain is PTS system lactose-specific EIICB component, found in Staphylococcus aureus (strain N315).